Consider the following 719-residue polypeptide: Acyl-coenzyme A oxidase (719 aa).

Residues 716–719 carry the Microbody targeting signal motif; that stretch reads APKI.

Belongs to the acyl-CoA oxidase family. FAD serves as cofactor.

It localises to the peroxisome. The enzyme catalyses a 2,3-saturated acyl-CoA + O2 = a (2E)-enoyl-CoA + H2O2. The protein operates within lipid metabolism; peroxisomal fatty acid beta-oxidation. This Komagataella pastoris (Yeast) protein is Acyl-coenzyme A oxidase (POX1).